The sequence spans 386 residues: 3-hydroxyisobutyryl-CoA hydrolase, mitochondrial (386 aa).

The N-terminal 32 residues, 1–32 (MGLQGLCRLMSRFNSYKRTNIILQHLKMSNHT), are a transit peptide targeting the mitochondrion. Position 92 is an N6-acetyllysine; alternate (K92). An N6-succinyllysine; alternate modification is found at K92. Positions 121, 146, 169, and 177 each coordinate substrate. K221 is subject to N6-acetyllysine; alternate. N6-succinyllysine; alternate is present on K221. The residue at position 234 (S234) is a Phosphoserine. An N6-succinyllysine mark is found at K250 and K257. Residue K297 is modified to N6-acetyllysine; alternate. Position 297 is an N6-succinyllysine; alternate (K297). N6-succinyllysine is present on K301. An N6-acetyllysine; alternate modification is found at K353. K353 is modified (N6-succinyllysine; alternate). S356 carries the phosphoserine modification. An N6-acetyllysine mark is found at K360 and K365. Position 377 is an N6-succinyllysine (K377).

The protein belongs to the enoyl-CoA hydratase/isomerase family.

The protein resides in the mitochondrion. The enzyme catalyses 3-hydroxy-2-methylpropanoyl-CoA + H2O = 3-hydroxy-2-methylpropanoate + CoA + H(+). It participates in amino-acid degradation; L-valine degradation. Hydrolyzes 3-hydroxyisobutyryl-CoA (HIBYL-CoA), a saline catabolite. Has high activity toward isobutyryl-CoA. Could be an isobutyryl-CoA dehydrogenase that functions in valine catabolism. Also hydrolyzes 3-hydroxypropanoyl-CoA. This Bos taurus (Bovine) protein is 3-hydroxyisobutyryl-CoA hydrolase, mitochondrial (HIBCH).